We begin with the raw amino-acid sequence, 459 residues long: Lipase 4 (459 aa).

Residues 1-14 (MLFLLFLLVAPIYA) form the signal peptide. C110 and C281 are oxidised to a cystine. Catalysis depends on S194, which acts as the Charge relay system. N229 and N266 each carry an N-linked (GlcNAc...) asparagine glycan. Active-site charge relay system residues include D343 and H376. A disulfide bond links C359 and C404.

This sequence belongs to the AB hydrolase superfamily. Lipase family. Class Lip subfamily.

Its subcellular location is the secreted. It catalyses the reaction a triacylglycerol + H2O = a diacylglycerol + a fatty acid + H(+). Its function is as follows. Secreted lipase that is able to hydrolyze both the neutral triacylglycerols and the monopalmitate ester Tween 40, allowing the use of hydrolyzed products as carbon sources. Has broad lipolytic activity, which may be important for colonization and subsequent infection, therefore contributing to the persistence and virulence in human tissue. The protein is Lipase 4 of Candida albicans (strain SC5314 / ATCC MYA-2876) (Yeast).